The sequence spans 351 residues: Histidine protein kinase SaeS (351 aa).

The next 2 helical transmembrane spans lie at 9–29 and 40–60; these read IIIGVVSSILLTSTILAIAYI and TLTLTTIITSCLTLLICSIFI. In terms of domain architecture, HAMP spans 61–114; that stretch reads NPLIQKIKQFNIKTKQFANGNYASNDKTFNSPKEIYELNQSFNKMASEITQQMN. The Histidine kinase domain maps to 129 to 348; sequence NLAHDLKTPL…TMTVTLHKLD (220 aa). The residue at position 132 (histidine 132) is a Phosphohistidine; by autocatalysis.

In terms of processing, autophosphorylated.

Its subcellular location is the cell membrane. It catalyses the reaction ATP + protein L-histidine = ADP + protein N-phospho-L-histidine.. Its function is as follows. Member of the two-component regulatory system SaeR/SaeS involved in the regulation of staphylococcal virulence factors in a strain-dependent fashion. Probably functions as a membrane-associated protein kinase that upon sensing the appropriate signal, autophosphorylates and in turn activates the cytosolic response regulator SaeR. This Staphylococcus aureus (strain bovine RF122 / ET3-1) protein is Histidine protein kinase SaeS (saeS).